The following is an 860-amino-acid chain: Eukaryotic translation initiation factor 3 subunit C (860 aa).

The disordered stretch occupies residues 1-76 (MSRFFYGNDS…SEESEEEDVV (76 aa)). Over residues 10–51 (SDSDSSGSDEEELYSDEEVEQSEEESSEEDASSEEESSEDED) the composition is skewed to acidic residues. The 175-residue stretch at 599–773 (FHMHINLELL…DAIVFRKGVE (175 aa)) folds into the PCI domain. A disordered region spans residues 812 to 860 (RDQGAGARGGRGPRGGGQARGGPRLPGGQQRRPGGQQFGGGALGGAIKA). A compositionally biased stretch (gly residues) spans 817-831 (GARGGRGPRGGGQAR). Over residues 832 to 846 (GGPRLPGGQQRRPGG) the composition is skewed to low complexity. The span at 847–860 (QQFGGGALGGAIKA) shows a compositional bias: gly residues.

It belongs to the eIF-3 subunit C family. Component of the eukaryotic translation initiation factor 3 (eIF-3) complex.

It is found in the cytoplasm. Functionally, component of the eukaryotic translation initiation factor 3 (eIF-3) complex, which is involved in protein synthesis of a specialized repertoire of mRNAs and, together with other initiation factors, stimulates binding of mRNA and methionyl-tRNAi to the 40S ribosome. The eIF-3 complex specifically targets and initiates translation of a subset of mRNAs involved in cell proliferation. The sequence is that of Eukaryotic translation initiation factor 3 subunit C (nip1) from Emericella nidulans (strain FGSC A4 / ATCC 38163 / CBS 112.46 / NRRL 194 / M139) (Aspergillus nidulans).